The following is a 373-amino-acid chain: Queuine tRNA-ribosyltransferase (373 aa).

Catalysis depends on aspartate 90, which acts as the Proton acceptor. Residues 90–94, aspartate 144, glutamine 193, and glycine 220 contribute to the substrate site; that span reads DSGGF. Residues 251-257 are RNA binding; sequence GVGTPED. Aspartate 270 (nucleophile) is an active-site residue. The segment at 275-279 is RNA binding; important for wobble base 34 recognition; the sequence is TRNAR. Residues cysteine 308, cysteine 310, cysteine 313, and histidine 339 each coordinate Zn(2+).

It belongs to the queuine tRNA-ribosyltransferase family. Homodimer. Within each dimer, one monomer is responsible for RNA recognition and catalysis, while the other monomer binds to the replacement base PreQ1. The cofactor is Zn(2+).

It carries out the reaction 7-aminomethyl-7-carbaguanine + guanosine(34) in tRNA = 7-aminomethyl-7-carbaguanosine(34) in tRNA + guanine. It participates in tRNA modification; tRNA-queuosine biosynthesis. Its function is as follows. Catalyzes the base-exchange of a guanine (G) residue with the queuine precursor 7-aminomethyl-7-deazaguanine (PreQ1) at position 34 (anticodon wobble position) in tRNAs with GU(N) anticodons (tRNA-Asp, -Asn, -His and -Tyr). Catalysis occurs through a double-displacement mechanism. The nucleophile active site attacks the C1' of nucleotide 34 to detach the guanine base from the RNA, forming a covalent enzyme-RNA intermediate. The proton acceptor active site deprotonates the incoming PreQ1, allowing a nucleophilic attack on the C1' of the ribose to form the product. After dissociation, two additional enzymatic reactions on the tRNA convert PreQ1 to queuine (Q), resulting in the hypermodified nucleoside queuosine (7-(((4,5-cis-dihydroxy-2-cyclopenten-1-yl)amino)methyl)-7-deazaguanosine). The protein is Queuine tRNA-ribosyltransferase of Campylobacter jejuni subsp. jejuni serotype O:6 (strain 81116 / NCTC 11828).